The primary structure comprises 417 residues: Putative plant UBX domain-containing protein 14 (417 aa).

The 81-residue stretch at 335 to 415 (DRSVVCSICV…GIANSMISVT (81 aa)) folds into the UBX domain.

The polypeptide is Putative plant UBX domain-containing protein 14 (Arabidopsis thaliana (Mouse-ear cress)).